A 356-amino-acid polypeptide reads, in one-letter code: Altered inheritance of mitochondria protein 23, mitochondrial (356 aa).

Residues 1 to 32 (MLKVPLSDVLSQKMLFLKSFRYFHCTKYFSRD) constitute a mitochondrion transit peptide.

It belongs to the AIM23 family.

The protein localises to the mitochondrion. This is Altered inheritance of mitochondria protein 23, mitochondrial (AIM23) from Saccharomyces cerevisiae (strain YJM789) (Baker's yeast).